The following is a 474-amino-acid chain: Probable aspartate--tRNA ligase, cytoplasmic (474 aa).

Glutamate 203 provides a ligand contact to L-aspartate. An aspartate region spans residues 225–228 (QLYK). Arginine 247 serves as a coordination point for L-aspartate. Residues 247-249 (RAE), 255-257 (RYL), and glutamate 397 each bind ATP. L-aspartate-binding residues include serine 400 and arginine 404. 445-448 (GLER) contributes to the ATP binding site.

It belongs to the class-II aminoacyl-tRNA synthetase family. Type 2 subfamily. As to quaternary structure, homodimer.

The protein resides in the cytoplasm. It carries out the reaction tRNA(Asp) + L-aspartate + ATP = L-aspartyl-tRNA(Asp) + AMP + diphosphate. The chain is Probable aspartate--tRNA ligase, cytoplasmic from Enterocytozoon bieneusi (strain H348) (Microsporidian parasite).